A 286-amino-acid polypeptide reads, in one-letter code: Nucleotide-binding protein HCH_05324 (286 aa).

ATP is bound at residue 8–15; that stretch reads GRSGSGKS. Residue 60-63 participates in GTP binding; it reads DARN.

It belongs to the RapZ-like family.

In terms of biological role, displays ATPase and GTPase activities. This Hahella chejuensis (strain KCTC 2396) protein is Nucleotide-binding protein HCH_05324.